The primary structure comprises 82 residues: Probable 26S proteasome complex subunit dss-1 (82 aa).

Residues 56-82 are disordered; sequence NWDDETHESEFSKQLKEELRKSGHQVA. The segment covering 63-76 has biased composition (basic and acidic residues); it reads ESEFSKQLKEELRK.

This sequence belongs to the DSS1/SEM1 family. As to quaternary structure, part of the 26S proteasome. Expressed in intestinal epithelium and head neurons.

Its subcellular location is the nucleus. It is found in the cytoplasm. Functionally, subunit of the 26S proteasome which plays a role in ubiquitin-dependent proteolysis. Has an essential role in oogenesis and larval growth. Required for intestinal function and default lifespan. The protein is Probable 26S proteasome complex subunit dss-1 (dss-1) of Caenorhabditis elegans.